The primary structure comprises 474 residues: 4-aminobutyrate aminotransferase (474 aa).

Residues 1–13 are compositionally biased toward polar residues; sequence MSSTATVTESTHF. The disordered stretch occupies residues 1–31; that stretch reads MSSTATVTESTHFFPNEPQGPSIKTETIPGP. Residue 142-143 participates in pyridoxal 5'-phosphate binding; it reads GS. Arginine 199 is a substrate binding site. Lysine 333 bears the N6-(pyridoxal phosphate)lysine mark. Threonine 357 is a binding site for pyridoxal 5'-phosphate.

It belongs to the class-III pyridoxal-phosphate-dependent aminotransferase family. In terms of assembly, homodimer. Requires pyridoxal 5'-phosphate as cofactor.

The protein resides in the cytoplasm. The catalysed reaction is 4-aminobutanoate + 2-oxoglutarate = succinate semialdehyde + L-glutamate. Functionally, required for the degradation of gamma-aminobutyric acid (GABA), which is important for utilization of GABA as nitrogen source. Deaminates GABA to succinate-semialdehyde, which in turn is converted to succinate by the succinate semialdehyde dehydrogenase. Cannot transaminate beta-alanine (BAL). In Schizosaccharomyces pombe (strain 972 / ATCC 24843) (Fission yeast), this protein is 4-aminobutyrate aminotransferase (uga1).